Here is a 132-residue protein sequence, read N- to C-terminus: Small ribosomal subunit protein uS8 (132 aa).

Belongs to the universal ribosomal protein uS8 family. In terms of assembly, part of the 30S ribosomal subunit. Contacts proteins S5 and S12.

One of the primary rRNA binding proteins, it binds directly to 16S rRNA central domain where it helps coordinate assembly of the platform of the 30S subunit. In Ureaplasma urealyticum serovar 10 (strain ATCC 33699 / Western), this protein is Small ribosomal subunit protein uS8.